The primary structure comprises 286 residues: Beta-lactamase SHV-8 (286 aa).

The first 21 residues, 1–21 (MRYIRLCIISLLATLPLAVHA), serve as a signal peptide directing secretion. The Acyl-ester intermediate role is filled by Ser-66. A disulfide bridge connects residues Cys-73 and Cys-119. Catalysis depends on Glu-164, which acts as the Proton acceptor. 230–232 (KTG) serves as a coordination point for substrate.

This sequence belongs to the class-A beta-lactamase family.

It carries out the reaction a beta-lactam + H2O = a substituted beta-amino acid. Functionally, SHV enzymes hydrolyze broad spectrum cephalosporins notably cefotaxime and ceftazidime. The protein is Beta-lactamase SHV-8 (bla) of Escherichia coli.